Reading from the N-terminus, the 806-residue chain is Leucine--tRNA ligase (806 aa).

The 'HIGH' region signature appears at 40 to 51 (PYPSGQGLHVGH). The 'KMSKS' region signature appears at 578–582 (KMSKS). Lys581 is an ATP binding site.

Belongs to the class-I aminoacyl-tRNA synthetase family.

Its subcellular location is the cytoplasm. The catalysed reaction is tRNA(Leu) + L-leucine + ATP = L-leucyl-tRNA(Leu) + AMP + diphosphate. In Limosilactobacillus reuteri (strain DSM 20016) (Lactobacillus reuteri), this protein is Leucine--tRNA ligase.